We begin with the raw amino-acid sequence, 397 residues long: MVERARRLGRWFLALDSLLVILGFFVVMPMISLRFVDQLGWAAGVVGLALGLRQLTQQGLGILGGSLADKFGARPLIVGGMLLRAAGFASLAYAQSGLELILSCVISGLGGCLFDPPRAALVIKFTRPRQRGRYISLLMMLESAGAVVGALLGSWLLNFDFEYVCLLGAGLFVCAALCNLLILPAYKLSVRPTPIRAGLGQVLADKAFCRLVLILSGYYALWVQVMLIFPILVKQMAGTTTAVGWMYTLETAISLALLYPLARYGERHFKLESRLMAGVLLMTTGIGLVAFANTLPAVFMLLACFYLGIVIAEPARETLMTKLAQPGARGSYMGFSRLGLALGGMTGYVGGGALHDYAMLQGQPWLPWLVLGTVGVTTLLLLVNCFHREPSLARVNI.

Transmembrane regions (helical) follow at residues 11–31, 32–52, 71–91, 94–114, 137–157, 163–183, 211–231, 242–262, 291–311, 340–360, and 366–386; these read WFLA…MPMI, SLRF…ALGL, FGAR…FASL, AQSG…GCLF, LLMM…SWLL, YVCL…LLIL, LVLI…IFPI, AVGW…YPLA, FANT…GIVI, LALG…YAML, and LPWL…VNCF.

Belongs to the major facilitator superfamily. DHA1 family. MdtH (TC 2.A.1.2.21) subfamily.

The protein resides in the cell inner membrane. In Aeromonas hydrophila subsp. hydrophila (strain ATCC 7966 / DSM 30187 / BCRC 13018 / CCUG 14551 / JCM 1027 / KCTC 2358 / NCIMB 9240 / NCTC 8049), this protein is Multidrug resistance protein MdtH.